A 201-amino-acid polypeptide reads, in one-letter code: Potassium-transporting ATPase KdpC subunit (201 aa).

Residues 10–30 traverse the membrane as a helical segment; sequence VVLVVLTVICGLAYPLAMTGI. Residues 67–105 form a disordered region; the sequence is HGRPSATSAADPADPTKTVSSPYNAANSSGSNLGPTSKA. The segment covering 70–82 has biased composition (low complexity); that stretch reads PSATSAADPADPT. Positions 83–105 are enriched in polar residues; it reads KTVSSPYNAANSSGSNLGPTSKA.

Belongs to the KdpC family. As to quaternary structure, the system is composed of three essential subunits: KdpA, KdpB and KdpC.

It localises to the cell inner membrane. Part of the high-affinity ATP-driven potassium transport (or Kdp) system, which catalyzes the hydrolysis of ATP coupled with the electrogenic transport of potassium into the cytoplasm. This subunit acts as a catalytic chaperone that increases the ATP-binding affinity of the ATP-hydrolyzing subunit KdpB by the formation of a transient KdpB/KdpC/ATP ternary complex. The sequence is that of Potassium-transporting ATPase KdpC subunit from Rhodopseudomonas palustris (strain BisB5).